Reading from the N-terminus, the 42-residue chain is Hemoglobin subunit beta-A (42 aa).

The Globin domain occupies 2-42; it reads EWTDAERSAILSLWGKIDTDELGPALLARLXLVXXXTQRYF.

This sequence belongs to the globin family. Heterotetramer of two alpha chains and two beta chains. As to expression, red blood cells.

Functionally, involved in oxygen transport from gills to the various peripheral tissues. The sequence is that of Hemoglobin subunit beta-A from Catostomus clarkii (Desert sucker).